The chain runs to 102 residues: RxLR effector protein PexRD41 (102 aa).

Residues 1-21 (MRSIFYFALAFAALTCSNASA) form the signal peptide. The RxLR-dEER signature appears at 39–53 (RSLRVAGQEAARGEE).

This sequence belongs to the RxLR effector family. In terms of assembly, interacts with host KRBP1.

It is found in the secreted. The protein localises to the host cytoplasm. Its subcellular location is the host nucleus. The protein resides in the host nucleolus. Functionally, effector that enhances P.infestans colonization of host plant leaves. During the early stages of P.infestans infection, interacts with and stabilizes host potato K-homology (KH) RNA-binding protein KRBP1, leading to its accumulation. This is RxLR effector protein PexRD41 from Phytophthora infestans (strain T30-4) (Potato late blight agent).